We begin with the raw amino-acid sequence, 454 residues long: CBL-interacting protein kinase 4 (454 aa).

In terms of domain architecture, Protein kinase spans 25–284 (YELGRMLGRG…ESLAAHHPWF (260 aa)). ATP-binding positions include 31 to 39 (LGRGTFAKV) and lysine 54. Aspartate 151 acts as the Proton acceptor in catalysis. The interval 169-198 (DFGLAALPDTLRDDGRLHTACGTPAYAAPE) is activation loop. An NAF domain is found at 311–335 (APPPPLNAFDIISMSPGLDLSGLFG). A PPI region spans residues 341 to 370 (LREKRFTTTASPEKTLEQLGLAGGKLGYVV).

This sequence belongs to the protein kinase superfamily. CAMK Ser/Thr protein kinase family. SNF1 subfamily. Mn(2+) is required as a cofactor.

The enzyme catalyses L-seryl-[protein] + ATP = O-phospho-L-seryl-[protein] + ADP + H(+). It catalyses the reaction L-threonyl-[protein] + ATP = O-phospho-L-threonyl-[protein] + ADP + H(+). Its function is as follows. CIPK serine-threonine protein kinases interact with CBL proteins. Binding of a CBL protein to the regulatory NAF domain of CIPK protein lead to the activation of the kinase in a calcium-dependent manner. This chain is CBL-interacting protein kinase 4 (CIPK4), found in Oryza sativa subsp. japonica (Rice).